We begin with the raw amino-acid sequence, 233 residues long: Large ribosomal subunit protein uL1 (233 aa).

It belongs to the universal ribosomal protein uL1 family. Part of the 50S ribosomal subunit.

Functionally, binds directly to 23S rRNA. The L1 stalk is quite mobile in the ribosome, and is involved in E site tRNA release. In terms of biological role, protein L1 is also a translational repressor protein, it controls the translation of the L11 operon by binding to its mRNA. The sequence is that of Large ribosomal subunit protein uL1 from Psychrobacter sp. (strain PRwf-1).